Consider the following 304-residue polypeptide: Protoheme IX farnesyltransferase 2 (304 aa).

A run of 9 helical transmembrane segments spans residues 28-48, 50-70, 98-118, 122-142, 150-170, 176-196, 223-243, 245-265, and 282-302; these read VVALMLITAVVGMSLAPVVDF, WLQAAFGLVGIGLMAGSAAAF, ISVAIFSTALGVIGFVLLYAL, LTAWMTFLSLLGYAVVYTMYL, IVIAGIAGAMPPLLGWTAVTG, AWLLVMIIFIWTPPHFWAIAI, ILLYTILLTLVCILPVLVGMV, SVYLFSSLLLNAGFMYHAWKL, and IYHLLALFVALLADHYLGLFF.

The protein belongs to the UbiA prenyltransferase family. Protoheme IX farnesyltransferase subfamily.

It localises to the cell inner membrane. The catalysed reaction is heme b + (2E,6E)-farnesyl diphosphate + H2O = Fe(II)-heme o + diphosphate. Its pathway is porphyrin-containing compound metabolism; heme O biosynthesis; heme O from protoheme: step 1/1. Its function is as follows. Converts heme B (protoheme IX) to heme O by substitution of the vinyl group on carbon 2 of heme B porphyrin ring with a hydroxyethyl farnesyl side group. This chain is Protoheme IX farnesyltransferase 2, found in Vibrio campbellii (strain ATCC BAA-1116).